A 393-amino-acid polypeptide reads, in one-letter code: Dual specificity mitogen-activated protein kinase kinase 1 (393 aa).

The disordered stretch occupies residues 1–27 (MPKKKPTPIQLNPAPDGSAVNGTSSAE). The 294-residue stretch at 68–361 (FEKISELGAG…LKQLMVHAFI (294 aa)) folds into the Protein kinase domain. Residues 74-82 (LGAGNGGVV) and lysine 97 each bind ATP. Aspartate 190 acts as the Proton acceptor in catalysis. Residues serine 218 and serine 222 each carry the phosphoserine; by RAF modification. The interval 270–307 (ELELLFGCQVEGDAAETPPRPRTPGRPLSSYGMDSRPP) is RAF1-binding. The residue at position 286 (threonine 286) is a Phosphothreonine. Threonine 292 carries the phosphothreonine; by MAPK1 modification. Serine 298 bears the Phosphoserine; by PAK mark.

Belongs to the protein kinase superfamily. STE Ser/Thr protein kinase family. MAP kinase kinase subfamily. Found in a complex with at least BRAF, HRAS, MAP2K1, MAPK3/ERK1 and RGS14. Forms a heterodimer with MAP2K2/MEK2. Forms heterodimers with KSR2 which further dimerize to form tetramers. Interacts with KSR1 or KSR2 and BRAF; the interaction with KSR1 or KSR2 mediates KSR1-BRAF or KSR2-BRAF dimerization. Interacts with ARBB2, LAMTOR3, MAPK1/ERK2 and RAF1. Interacts with MAPK1/ERK2. Interacts with MORG1. Interacts with PPARG. Interacts with VRK2. Interacts with SGK1. Interacts with BIRC6/bruce. Interacts with KAT7; the interaction promotes KAT7 phosphorylation. Interacts with RAF1 and NEK10; the interaction is required for ERK1/2-signaling pathway activation in response to UV irradiation. Interacts with TRAF3IP3. Interacts with MOS. In terms of processing, phosphorylation at Ser-218 and Ser-222 by MAP kinase kinase kinases (BRAF or MEKK1) positively regulates kinase activity. Also phosphorylated at Thr-292 by MAPK1/ERK2 and at Ser-298 by PAK. MAPK1/ERK2 phosphorylation of Thr-292 occurs in response to cellular adhesion and leads to inhibition of Ser-298 phosphorylation by PAK. Autophosphorylated at Ser-218 and Ser-222, autophosphosphorylation is promoted by NEK10 following UV irradiation.

The protein localises to the cytoplasm. It is found in the cytoskeleton. Its subcellular location is the microtubule organizing center. It localises to the centrosome. The protein resides in the spindle pole body. The protein localises to the nucleus. It is found in the membrane. The catalysed reaction is L-seryl-[protein] + ATP = O-phospho-L-seryl-[protein] + ADP + H(+). It carries out the reaction L-threonyl-[protein] + ATP = O-phospho-L-threonyl-[protein] + ADP + H(+). The enzyme catalyses L-tyrosyl-[protein] + ATP = O-phospho-L-tyrosyl-[protein] + ADP + H(+). With respect to regulation, ras proteins such as HRAS mediate the activation of RAF proteins such as RAF1 or BRAF which in turn activate extracellular signal-regulated kinases (ERK) through MAPK (mitogen-activated protein kinases) and ERK kinases MAP2K1/MEK1 and MAP2K2/MEK2. Activation occurs through phosphorylation of Ser-218 and Ser-222. MAP2K1/MEK1 binds KSR1 or KSR2 releasing the inhibitory intramolecular interaction between KSR1 or KSR2 protein kinase and N-terminal domains. This allows KSR1 or KSR2 dimerization with BRAF leading to BRAF activation and phosphorylation of MAP2K1. MAP2K1/MEK1 is also the target of negative feed-back regulation by its substrate kinases, such as MAPK1/ERK2. These phosphorylate MAP2K1/MEK1 on Thr-292, thereby facilitating dephosphorylation of the activating residues Ser-218 and Ser-222. Inhibited by serine/threonine phosphatase 2A. Its function is as follows. Dual specificity protein kinase which acts as an essential component of the MAP kinase signal transduction pathway. Binding of extracellular ligands such as growth factors, cytokines and hormones to their cell-surface receptors activates RAS and this initiates RAF1 activation. RAF1 then further activates the dual-specificity protein kinases MAP2K1/MEK1 and MAP2K2/MEK2. Both MAP2K1/MEK1 and MAP2K2/MEK2 function specifically in the MAPK/ERK cascade, and catalyze the concomitant phosphorylation of a threonine and a tyrosine residue in a Thr-Glu-Tyr sequence located in the extracellular signal-regulated kinases MAPK3/ERK1 and MAPK1/ERK2, leading to their activation and further transduction of the signal within the MAPK/ERK cascade. Activates BRAF in a KSR1 or KSR2-dependent manner; by binding to KSR1 or KSR2 releases the inhibitory intramolecular interaction between KSR1 or KSR2 protein kinase and N-terminal domains which promotes KSR1 or KSR2-BRAF dimerization and BRAF activation. Depending on the cellular context, this pathway mediates diverse biological functions such as cell growth, adhesion, survival and differentiation, predominantly through the regulation of transcription, metabolism and cytoskeletal rearrangements. One target of the MAPK/ERK cascade is peroxisome proliferator-activated receptor gamma (PPARG), a nuclear receptor that promotes differentiation and apoptosis. MAP2K1/MEK1 has been shown to export PPARG from the nucleus. The MAPK/ERK cascade is also involved in the regulation of endosomal dynamics, including lysosome processing and endosome cycling through the perinuclear recycling compartment (PNRC), as well as in the fragmentation of the Golgi apparatus during mitosis. The polypeptide is Dual specificity mitogen-activated protein kinase kinase 1 (Rattus norvegicus (Rat)).